We begin with the raw amino-acid sequence, 449 residues long: Phosphoglucosamine mutase (449 aa).

Catalysis depends on Ser104, which acts as the Phosphoserine intermediate. Mg(2+)-binding residues include Ser104, Asp243, Asp245, and Asp247. Residue Ser104 is modified to Phosphoserine.

The protein belongs to the phosphohexose mutase family. Requires Mg(2+) as cofactor. Activated by phosphorylation.

It catalyses the reaction alpha-D-glucosamine 1-phosphate = D-glucosamine 6-phosphate. Its function is as follows. Catalyzes the conversion of glucosamine-6-phosphate to glucosamine-1-phosphate. The polypeptide is Phosphoglucosamine mutase (Xanthomonas campestris pv. campestris (strain 8004)).